Here is a 122-residue protein sequence, read N- to C-terminus: Small ribosomal subunit protein uS8c (122 aa).

It belongs to the universal ribosomal protein uS8 family. In terms of assembly, part of the 30S ribosomal subunit.

The protein resides in the plastid. It is found in the chloroplast. Functionally, one of the primary rRNA binding proteins, it binds directly to 16S rRNA central domain where it helps coordinate assembly of the platform of the 30S subunit. The protein is Small ribosomal subunit protein uS8c (rps8) of Ostreococcus tauri.